The chain runs to 434 residues: Homoserine dehydrogenase (434 aa).

2 residues coordinate NADPH: T13 and V14. Positions 14, 33, and 43 each coordinate NAD(+). Residue V14 coordinates NADP(+). R45 contributes to the NADPH binding site. The NADP(+) site is built by R45, R46, and K103. K103 lines the NADPH pocket. Na(+) is bound by residues E127, V130, G132, and I134. NADP(+) is bound by residues G185 and E188. L-homoserine contacts are provided by E188 and D199. The Proton donor role is filled by K203. Residue G300 coordinates NADPH. Residue G300 coordinates NAD(+). An NADP(+)-binding site is contributed by G300. In terms of domain architecture, ACT spans 353 to 429 (YLRIQAKDHP…GVSGPVVRIR (77 aa)).

It belongs to the homoserine dehydrogenase family. A metal cation serves as cofactor.

The enzyme catalyses L-homoserine + NADP(+) = L-aspartate 4-semialdehyde + NADPH + H(+). It catalyses the reaction L-homoserine + NAD(+) = L-aspartate 4-semialdehyde + NADH + H(+). It functions in the pathway amino-acid biosynthesis; L-methionine biosynthesis via de novo pathway; L-homoserine from L-aspartate: step 3/3. The protein operates within amino-acid biosynthesis; L-threonine biosynthesis; L-threonine from L-aspartate: step 3/5. Feedback inhibition by threonine. Functionally, catalyzes the conversion of L-aspartate-beta-semialdehyde (L-Asa) to L-homoserine (L-Hse), the third step in the biosynthesis of threonine and methionine from aspartate. This Pseudomonas aeruginosa (strain ATCC 15692 / DSM 22644 / CIP 104116 / JCM 14847 / LMG 12228 / 1C / PRS 101 / PAO1) protein is Homoserine dehydrogenase (hom).